Here is a 255-residue protein sequence, read N- to C-terminus: MVKLQRFSEKKSLIHEFGKFILEKQESALTGDADAVFNIAISGGSMNQALYESLVNDKNIFPHIKWPQWRIFFCDERLVPFEDPQSNYGQFKKTVLDPLVHQGNQLNLGPTVYTINESLIGGGETANRKIAEEYASMLPASFDLILLGCGEDGHTCSLFPGVEFNYLVEEMDRKVLWCNNSPKAPKDRITFTLAVVAEAKSVCFLVRGAAKKAIMHDVLIVKNSELPSVLVNEMVGTKVTWFLDDEAGALIPENC.

This sequence belongs to the glucosamine/galactosamine-6-phosphate isomerase family. 6-phosphogluconolactonase subfamily.

The protein resides in the cytoplasm. The catalysed reaction is 6-phospho-D-glucono-1,5-lactone + H2O = 6-phospho-D-gluconate + H(+). It participates in carbohydrate degradation; pentose phosphate pathway; D-ribulose 5-phosphate from D-glucose 6-phosphate (oxidative stage): step 2/3. Its function is as follows. Involved in the pentose phosphate pathway via hydrolysis of 6-phosphogluconolactone to 6-phosphogluconate. This is 6-phosphogluconolactonase 4 from Saccharomyces cerevisiae (strain ATCC 204508 / S288c) (Baker's yeast).